Reading from the N-terminus, the 36-residue chain is Thrombin-like enzyme TLP (36 aa).

Positions 1–36 constitute a Peptidase S1 domain; the sequence is IGGFECNEHEHRSLVYLYNSAGFFCAGTLLNHEWVV.

This sequence belongs to the peptidase S1 family. Snake venom subfamily. Monomer. In terms of tissue distribution, expressed by the venom gland.

Its subcellular location is the secreted. In terms of biological role, thrombin-like snake venom serine protease. Shows strong hydrolytic activity towards Boc-Asp(oBzl)-Pro-Arg-MCA, a synthetic substrate for thrombin. This is Thrombin-like enzyme TLP from Naja naja (Indian cobra).